The sequence spans 495 residues: Putative aldehyde dehydrogenase AldA (495 aa).

212-218 lines the NAD(+) pocket; the sequence is GKGSESG. Active-site residues include Glu-256 and Cys-290.

It belongs to the aldehyde dehydrogenase family.

The catalysed reaction is an aldehyde + NAD(+) + H2O = a carboxylate + NADH + 2 H(+). The chain is Putative aldehyde dehydrogenase AldA (aldA) from Staphylococcus aureus (strain MRSA252).